The following is a 212-amino-acid chain: Thiamine-phosphate synthase (212 aa).

4-amino-2-methyl-5-(diphosphooxymethyl)pyrimidine-binding positions include 35–39 (QLRDK) and N67. Mg(2+)-binding residues include D68 and D87. S106 is a 4-amino-2-methyl-5-(diphosphooxymethyl)pyrimidine binding site. 132-134 (TGS) serves as a coordination point for 2-[(2R,5Z)-2-carboxy-4-methylthiazol-5(2H)-ylidene]ethyl phosphate. K135 provides a ligand contact to 4-amino-2-methyl-5-(diphosphooxymethyl)pyrimidine. Residues G163 and 183 to 184 (IS) each bind 2-[(2R,5Z)-2-carboxy-4-methylthiazol-5(2H)-ylidene]ethyl phosphate.

Belongs to the thiamine-phosphate synthase family. It depends on Mg(2+) as a cofactor.

It catalyses the reaction 2-[(2R,5Z)-2-carboxy-4-methylthiazol-5(2H)-ylidene]ethyl phosphate + 4-amino-2-methyl-5-(diphosphooxymethyl)pyrimidine + 2 H(+) = thiamine phosphate + CO2 + diphosphate. The enzyme catalyses 2-(2-carboxy-4-methylthiazol-5-yl)ethyl phosphate + 4-amino-2-methyl-5-(diphosphooxymethyl)pyrimidine + 2 H(+) = thiamine phosphate + CO2 + diphosphate. The catalysed reaction is 4-methyl-5-(2-phosphooxyethyl)-thiazole + 4-amino-2-methyl-5-(diphosphooxymethyl)pyrimidine + H(+) = thiamine phosphate + diphosphate. It participates in cofactor biosynthesis; thiamine diphosphate biosynthesis; thiamine phosphate from 4-amino-2-methyl-5-diphosphomethylpyrimidine and 4-methyl-5-(2-phosphoethyl)-thiazole: step 1/1. Functionally, condenses 4-methyl-5-(beta-hydroxyethyl)thiazole monophosphate (THZ-P) and 2-methyl-4-amino-5-hydroxymethyl pyrimidine pyrophosphate (HMP-PP) to form thiamine monophosphate (TMP). The sequence is that of Thiamine-phosphate synthase from Methanocella arvoryzae (strain DSM 22066 / NBRC 105507 / MRE50).